Here is a 227-residue protein sequence, read N- to C-terminus: UPF0688 protein C1orf174 homolog (227 aa).

Disordered stretches follow at residues 1 to 122 (MRKR…VSDL) and 207 to 227 (AKEEDEDDDDYVDGLANEGNI). The segment covering 47–63 (TEKESSKKLRKDEKGPV) has biased composition (basic and acidic residues). Polar residues-rich tracts occupy residues 77-104 (AASNESSNVNDSQQSEKSITNTKDNGTR) and 113-122 (RLPSSPVSDL).

It belongs to the UPF0688 family.

Its subcellular location is the nucleus. This chain is UPF0688 protein C1orf174 homolog, found in Xenopus tropicalis (Western clawed frog).